Here is a 320-residue protein sequence, read N- to C-terminus: Beta-ketoacyl-[acyl-carrier-protein] synthase III (320 aa).

Active-site residues include cysteine 114 and histidine 247. An ACP-binding region spans residues 248–252 (QANRR). Asparagine 277 is an active-site residue.

This sequence belongs to the thiolase-like superfamily. FabH family. As to quaternary structure, homodimer.

Its subcellular location is the cytoplasm. It carries out the reaction malonyl-[ACP] + acetyl-CoA + H(+) = 3-oxobutanoyl-[ACP] + CO2 + CoA. It participates in lipid metabolism; fatty acid biosynthesis. Functionally, catalyzes the condensation reaction of fatty acid synthesis by the addition to an acyl acceptor of two carbons from malonyl-ACP. Catalyzes the first condensation reaction which initiates fatty acid synthesis and may therefore play a role in governing the total rate of fatty acid production. Possesses both acetoacetyl-ACP synthase and acetyl transacylase activities. Its substrate specificity determines the biosynthesis of branched-chain and/or straight-chain of fatty acids. The chain is Beta-ketoacyl-[acyl-carrier-protein] synthase III from Neisseria meningitidis serogroup B (strain ATCC BAA-335 / MC58).